The following is a 259-amino-acid chain: Ribonuclease HII (259 aa).

Residues 70–258 (TLIAGIDEVG…VKSLVLGKKE (189 aa)) enclose the RNase H type-2 domain. A divalent metal cation contacts are provided by aspartate 76, glutamate 77, and aspartate 168.

This sequence belongs to the RNase HII family. Mn(2+) serves as cofactor. The cofactor is Mg(2+).

Its subcellular location is the cytoplasm. The catalysed reaction is Endonucleolytic cleavage to 5'-phosphomonoester.. Its function is as follows. Endonuclease that specifically degrades the RNA of RNA-DNA hybrids. This Streptococcus pneumoniae (strain 70585) protein is Ribonuclease HII.